A 442-amino-acid chain; its full sequence is Ribosome biogenesis protein NOP53 (442 aa).

Positions 242-264 are disordered; it reads KPSSNTNLKKIEDKTPRQAQKSV.

The protein belongs to the NOP53 family.

Its subcellular location is the nucleus. The protein resides in the nucleolus. The protein localises to the nucleoplasm. Functionally, may play a role in ribosome biogenesis. The chain is Ribosome biogenesis protein NOP53 from Arabidopsis thaliana (Mouse-ear cress).